The chain runs to 158 residues: MANQTIIDTVMKTVSPVIEPPYELVDVEYEKMGSDYILSVFVDKEGGISVEDTVTLTELISPLLDAIHPDPFPEQYMLEVSSPGLERPLKTPEALTKAIGSYVNVSLYKAIDKVKVFQGDLVAFDGDTLTIHYLDKTRQKTVEIPYQTVAKARLAVKL.

The protein belongs to the RimP family.

Its subcellular location is the cytoplasm. Functionally, required for maturation of 30S ribosomal subunits. This chain is Ribosome maturation factor RimP, found in Streptococcus uberis (strain ATCC BAA-854 / 0140J).